Here is a 75-residue protein sequence, read N- to C-terminus: Small ribosomal subunit protein bS18 (75 aa).

Belongs to the bacterial ribosomal protein bS18 family. As to quaternary structure, part of the 30S ribosomal subunit. Forms a tight heterodimer with protein bS6.

Its function is as follows. Binds as a heterodimer with protein bS6 to the central domain of the 16S rRNA, where it helps stabilize the platform of the 30S subunit. The chain is Small ribosomal subunit protein bS18 from Anaplasma marginale (strain St. Maries).